We begin with the raw amino-acid sequence, 142 residues long: Putative pre-16S rRNA nuclease (142 aa).

The protein belongs to the YqgF nuclease family.

It localises to the cytoplasm. In terms of biological role, could be a nuclease involved in processing of the 5'-end of pre-16S rRNA. The protein is Putative pre-16S rRNA nuclease of Azotobacter vinelandii (strain DJ / ATCC BAA-1303).